An 826-amino-acid polypeptide reads, in one-letter code: Periplasmic nitrate reductase (826 aa).

Residues 1–32 (MSISRREFLKANAAVAAATAVGATLPVKIVEA) constitute a signal peptide (tat-type signal). One can recognise a 4Fe-4S Mo/W bis-MGD-type domain in the interval 39–95 (IKWDKAPCRFCGVGCSVLVGTDNGKVVATKGDPESPVNKGLNCIKGYFLSKIMYGKD). The [4Fe-4S] cluster site is built by Cys-46, Cys-49, Cys-53, and Cys-81. Mo-bis(molybdopterin guanine dinucleotide) is bound by residues Lys-83, Gln-150, Asn-175, Cys-179, 212–219 (WGANMAEM), 262–264 (QSD), Met-372, Gln-376, Asn-482, 508–509 (SD), Lys-531, Asp-558, and 716–725 (TGRVLEHWHT). Phe-792 serves as a coordination point for substrate. Positions 800 and 817 each coordinate Mo-bis(molybdopterin guanine dinucleotide).

Belongs to the prokaryotic molybdopterin-containing oxidoreductase family. NasA/NapA/NarB subfamily. In terms of assembly, component of the periplasmic nitrate reductase NapAB complex composed of NapA and NapB. Requires [4Fe-4S] cluster as cofactor. Mo-bis(molybdopterin guanine dinucleotide) is required as a cofactor. Post-translationally, predicted to be exported by the Tat system. The position of the signal peptide cleavage has not been experimentally proven.

It is found in the periplasm. The enzyme catalyses 2 Fe(II)-[cytochrome] + nitrate + 2 H(+) = 2 Fe(III)-[cytochrome] + nitrite + H2O. Catalytic subunit of the periplasmic nitrate reductase complex NapAB. Receives electrons from NapB and catalyzes the reduction of nitrate to nitrite. The polypeptide is Periplasmic nitrate reductase (Shewanella halifaxensis (strain HAW-EB4)).